A 337-amino-acid polypeptide reads, in one-letter code: Anthranilate phosphoribosyltransferase (337 aa).

5-phospho-alpha-D-ribose 1-diphosphate-binding positions include Gly-79, 82–83, Thr-87, 89–92, 107–115, and Ser-119; these read GD, NVST, and KHGNRSVSS. An anthranilate-binding site is contributed by Gly-79. Mg(2+) is bound at residue Ser-91. Residue Asn-110 participates in anthranilate binding. Anthranilate is bound at residue Arg-165. Residues Asp-223 and Glu-224 each coordinate Mg(2+).

It belongs to the anthranilate phosphoribosyltransferase family. In terms of assembly, homodimer. Mg(2+) serves as cofactor.

The catalysed reaction is N-(5-phospho-beta-D-ribosyl)anthranilate + diphosphate = 5-phospho-alpha-D-ribose 1-diphosphate + anthranilate. It participates in amino-acid biosynthesis; L-tryptophan biosynthesis; L-tryptophan from chorismate: step 2/5. Functionally, catalyzes the transfer of the phosphoribosyl group of 5-phosphorylribose-1-pyrophosphate (PRPP) to anthranilate to yield N-(5'-phosphoribosyl)-anthranilate (PRA). The sequence is that of Anthranilate phosphoribosyltransferase from Aeromonas salmonicida (strain A449).